Here is a 294-residue protein sequence, read N- to C-terminus: uncharacterized protein (294 aa).

An N-terminal signal peptide occupies residues 1-18 (MKKLLLIITVFFTCSAVA).

This is an uncharacterized protein from Rickettsia bellii (strain RML369-C).